The following is a 1023-amino-acid chain: Hemolysin, chromosomal (1023 aa).

The next 3 helical transmembrane spans lie at 237 to 259 (IGAG…ILSN), 267 to 326 (KAAA…LSIA), and 364 to 410 (DASL…GILE). 2 N6-myristoyl lysine lipidation sites follow: lysine 563 and lysine 689. Hemolysin-type calcium-binding repeat units lie at residues 731-748 (FGSK…DDHI), 749-766 (EGND…NDTL), 767-784 (SGGN…NDKL), 785-802 (IGGA…DDEL), 815-832 (SGGK…ADLL), and 833-850 (DGGE…NDIY). Residues 747–763 (HIEGNDGNDRLYGDKGN) are compositionally biased toward basic and acidic residues. The interval 747–780 (HIEGNDGNDRLYGDKGNDTLSGGNGDDQLYGGDG) is disordered.

It belongs to the RTX prokaryotic toxin (TC 1.C.11) family. Post-translationally, myristoylated by HlyC; the toxin only becomes active when modified. Mainly myristoylated, while a minor fraction is acylated with pentadecanoyl (C15:0; 26%) and heptadecanoyl (C17:0; 6%) fatty acyl groups. Fatty acylation is involved in binding to host membranes and promotes the irreversible insertion of Hemolysin into the host cell membrane. Can be activated by both myristoylation and palmitoylation, but HlyC catalyzes lysine myristoylation.

It is found in the secreted. The protein resides in the host cell membrane. Bacterial hemolysins are exotoxins that attack blood cell membranes and cause cell rupture by forming a pore. This Escherichia coli protein is Hemolysin, chromosomal.